The chain runs to 143 residues: Large ribosomal subunit protein uL13 (143 aa).

This sequence belongs to the universal ribosomal protein uL13 family. As to quaternary structure, part of the 50S ribosomal subunit.

This protein is one of the early assembly proteins of the 50S ribosomal subunit, although it is not seen to bind rRNA by itself. It is important during the early stages of 50S assembly. The polypeptide is Large ribosomal subunit protein uL13 (Thermoanaerobacter pseudethanolicus (strain ATCC 33223 / 39E) (Clostridium thermohydrosulfuricum)).